A 266-amino-acid polypeptide reads, in one-letter code: UPF0294 protein Ent638_0743 (266 aa).

This sequence belongs to the UPF0294 family.

It localises to the cytoplasm. This chain is UPF0294 protein Ent638_0743, found in Enterobacter sp. (strain 638).